We begin with the raw amino-acid sequence, 298 residues long: Sulfate adenylyltransferase subunit 2 (298 aa).

Basic and acidic residues-rich tracts occupy residues 272 to 282 (RTSERQGRLID) and 289 to 298 (MEKKKQEGYF). Residues 272-298 (RTSERQGRLIDSDSAGSMEKKKQEGYF) form a disordered region.

Belongs to the PAPS reductase family. CysD subfamily. As to quaternary structure, heterodimer composed of CysD, the smaller subunit, and CysN.

It catalyses the reaction sulfate + ATP + H(+) = adenosine 5'-phosphosulfate + diphosphate. Its pathway is sulfur metabolism; hydrogen sulfide biosynthesis; sulfite from sulfate: step 1/3. Its function is as follows. With CysN forms the ATP sulfurylase (ATPS) that catalyzes the adenylation of sulfate producing adenosine 5'-phosphosulfate (APS) and diphosphate, the first enzymatic step in sulfur assimilation pathway. APS synthesis involves the formation of a high-energy phosphoric-sulfuric acid anhydride bond driven by GTP hydrolysis by CysN coupled to ATP hydrolysis by CysD. In Burkholderia lata (strain ATCC 17760 / DSM 23089 / LMG 22485 / NCIMB 9086 / R18194 / 383), this protein is Sulfate adenylyltransferase subunit 2.